Reading from the N-terminus, the 1071-residue chain is Carbamoyl phosphate synthase large chain (1071 aa).

Residues Met1–Asp399 form a carboxyphosphate synthetic domain region. Arg129, Arg169, Gly175, Gly176, Glu208, Val210, Glu215, Gly241, Val242, His243, Gln284, and Glu296 together coordinate ATP. The ATP-grasp 1 domain occupies Lys133–Ile325. Gln284, Glu296, and Asn298 together coordinate Mg(2+). Residues Gln284, Glu296, and Asn298 each contribute to the Mn(2+) site. The tract at residues Ile400 to Thr540 is oligomerization domain. Residues Asn541–Val932 are carbamoyl phosphate synthetic domain. The ATP-grasp 2 domain occupies Tyr673–Ala864. Residues Arg709, Asp748, Leu750, Glu755, Gly780, Val781, His782, Ser783, Gln823, and Glu835 each contribute to the ATP site. Residues Gln823, Glu835, and Asn837 each contribute to the Mg(2+) site. Gln823, Glu835, and Asn837 together coordinate Mn(2+). In terms of domain architecture, MGS-like spans Asn931 to Asn1071. Positions Leu933 to Asn1071 are allosteric domain.

The protein belongs to the CarB family. As to quaternary structure, composed of two chains; the small (or glutamine) chain promotes the hydrolysis of glutamine to ammonia, which is used by the large (or ammonia) chain to synthesize carbamoyl phosphate. Tetramer of heterodimers (alpha,beta)4. Mg(2+) serves as cofactor. It depends on Mn(2+) as a cofactor.

The enzyme catalyses hydrogencarbonate + L-glutamine + 2 ATP + H2O = carbamoyl phosphate + L-glutamate + 2 ADP + phosphate + 2 H(+). It carries out the reaction hydrogencarbonate + NH4(+) + 2 ATP = carbamoyl phosphate + 2 ADP + phosphate + 2 H(+). It participates in amino-acid biosynthesis; L-arginine biosynthesis; carbamoyl phosphate from bicarbonate: step 1/1. It functions in the pathway pyrimidine metabolism; UMP biosynthesis via de novo pathway; (S)-dihydroorotate from bicarbonate: step 1/3. Its function is as follows. Large subunit of the glutamine-dependent carbamoyl phosphate synthetase (CPSase). CPSase catalyzes the formation of carbamoyl phosphate from the ammonia moiety of glutamine, carbonate, and phosphate donated by ATP, constituting the first step of 2 biosynthetic pathways, one leading to arginine and/or urea and the other to pyrimidine nucleotides. The large subunit (synthetase) binds the substrates ammonia (free or transferred from glutamine from the small subunit), hydrogencarbonate and ATP and carries out an ATP-coupled ligase reaction, activating hydrogencarbonate by forming carboxy phosphate which reacts with ammonia to form carbamoyl phosphate. The chain is Carbamoyl phosphate synthase large chain from Methanosarcina barkeri (strain Fusaro / DSM 804).